Consider the following 960-residue polypeptide: Probable glutamyl endopeptidase, chloroplastic (960 aa).

The N-terminal 62 residues, 1-62, are a transit peptide targeting the chloroplast; sequence MMRFHKACHR…FSENPLTTVM (62 aa). Residues 78–98 form a disordered region; it reads SGGAEDGGGTSNGSLSASATA. A compositionally biased stretch (polar residues) spans 89 to 98; the sequence is NGSLSASATA. Catalysis depends on charge relay system residues serine 780, aspartate 854, and histidine 888. The interval 915–960 is disordered; sequence TSDADTSPDQSKEGSDSADKVSTGTGGGNPEFGEHEVHSKLRRSLL. Basic and acidic residues predominate over residues 924-933; sequence QSKEGSDSAD.

Belongs to the peptidase S9D family.

It localises to the plastid. The protein resides in the chloroplast stroma. Serine-type protease active in vitro against the LHCII N-terminal. Cleaves its substrate on the carboxy-side of Glu residues. This chain is Probable glutamyl endopeptidase, chloroplastic (GEP), found in Arabidopsis thaliana (Mouse-ear cress).